Reading from the N-terminus, the 150-residue chain is MVRIAVVVSEFNYDVTQLMLQKALEHAKFLGAEVTYVVKVPGVYDIPTLLRDLVAKEEVDAVVTLGAVIQGATKHDEVVAHQAARKILDISVESGKPITLGIIGPGANRMQALERVEEYAKRAVEAAVKLARRKKTLREAKYAGSTVFID.

Residues Phe-11, 43–45 (VYD), and 67–69 (AVI) contribute to the 5-amino-6-(D-ribitylamino)uracil site. Residue 72–73 (AT) participates in (2S)-2-hydroxy-3-oxobutyl phosphate binding. His-75 functions as the Proton donor in the catalytic mechanism. Residue Leu-100 participates in 5-amino-6-(D-ribitylamino)uracil binding. Arg-115 serves as a coordination point for (2S)-2-hydroxy-3-oxobutyl phosphate.

The protein belongs to the DMRL synthase family.

The catalysed reaction is (2S)-2-hydroxy-3-oxobutyl phosphate + 5-amino-6-(D-ribitylamino)uracil = 6,7-dimethyl-8-(1-D-ribityl)lumazine + phosphate + 2 H2O + H(+). It participates in cofactor biosynthesis; riboflavin biosynthesis; riboflavin from 2-hydroxy-3-oxobutyl phosphate and 5-amino-6-(D-ribitylamino)uracil: step 1/2. In terms of biological role, catalyzes the formation of 6,7-dimethyl-8-ribityllumazine by condensation of 5-amino-6-(D-ribitylamino)uracil with 3,4-dihydroxy-2-butanone 4-phosphate. This is the penultimate step in the biosynthesis of riboflavin. The sequence is that of 6,7-dimethyl-8-ribityllumazine synthase from Pyrobaculum arsenaticum (strain DSM 13514 / JCM 11321 / PZ6).